A 144-amino-acid polypeptide reads, in one-letter code: 3-hydroxyacyl-[acyl-carrier-protein] dehydratase FabZ (144 aa).

Residue H48 is part of the active site.

This sequence belongs to the thioester dehydratase family. FabZ subfamily.

Its subcellular location is the cytoplasm. It carries out the reaction a (3R)-hydroxyacyl-[ACP] = a (2E)-enoyl-[ACP] + H2O. Functionally, involved in unsaturated fatty acids biosynthesis. Catalyzes the dehydration of short chain beta-hydroxyacyl-ACPs and long chain saturated and unsaturated beta-hydroxyacyl-ACPs. The sequence is that of 3-hydroxyacyl-[acyl-carrier-protein] dehydratase FabZ from Listeria monocytogenes serotype 4b (strain CLIP80459).